The chain runs to 267 residues: MAYEPQFNPGETKIAENRRKHMNPNYELKKLREIADEDIVRVLGHRSPGESFKTVHPPLEEMDFEEDPMKDIVEPIEGAKQGTRIRYIQFADSMYNAPAQPYDRARTYMWRFRGVDTGTLSGRQVIEMRELDLEKVSKILLETEIFDPARCGIRGATVHGHSLRFDENGLMFDALQRYIYDEDSGHVVYVKDQVGRPLDQPVDMGEPLPEDELKEITTIYRKDNIGMREDEELLEVVNKIHEARTIGGFGMEVFKKDLNKRLGGANE.

Position 123 (Arg-123) interacts with coenzyme M.

This sequence belongs to the methyl-coenzyme M reductase gamma subunit family. As to quaternary structure, MCR is a hexamer of two alpha, two beta, and two gamma chains, forming a dimer of heterotrimers. Requires coenzyme F430 as cofactor.

It carries out the reaction coenzyme B + methyl-coenzyme M = methane + coenzyme M-coenzyme B heterodisulfide. The protein operates within one-carbon metabolism; methyl-coenzyme M reduction; methane from methyl-coenzyme M: step 1/1. In terms of biological role, component of the methyl-coenzyme M reductase (MCR) I that catalyzes the reductive cleavage of methyl-coenzyme M (CoM-S-CH3 or 2-(methylthio)ethanesulfonate) using coenzyme B (CoB or 7-mercaptoheptanoylthreonine phosphate) as reductant which results in the production of methane and the mixed heterodisulfide of CoB and CoM (CoM-S-S-CoB). This is the final step in methanogenesis. The chain is Methyl-coenzyme M reductase II subunit gamma (mrtG) from Methanothermus fervidus (strain ATCC 43054 / DSM 2088 / JCM 10308 / V24 S).